We begin with the raw amino-acid sequence, 110 residues long: UPF0122 protein spr1167 (110 aa).

This sequence belongs to the UPF0122 family.

Its function is as follows. Might take part in the signal recognition particle (SRP) pathway. This is inferred from the conservation of its genetic proximity to ftsY/ffh. May be a regulatory protein. The polypeptide is UPF0122 protein spr1167 (Streptococcus pneumoniae (strain ATCC BAA-255 / R6)).